The sequence spans 472 residues: Glutamate--tRNA ligase (472 aa).

Positions P9–S19 match the 'HIGH' region motif. Positions K237–R241 match the 'KMSKS' region motif. Residue K240 coordinates ATP.

Belongs to the class-I aminoacyl-tRNA synthetase family. Glutamate--tRNA ligase type 1 subfamily. As to quaternary structure, monomer.

The protein localises to the cytoplasm. It carries out the reaction tRNA(Glu) + L-glutamate + ATP = L-glutamyl-tRNA(Glu) + AMP + diphosphate. Its function is as follows. Catalyzes the attachment of glutamate to tRNA(Glu) in a two-step reaction: glutamate is first activated by ATP to form Glu-AMP and then transferred to the acceptor end of tRNA(Glu). The sequence is that of Glutamate--tRNA ligase from Buchnera aphidicola subsp. Baizongia pistaciae (strain Bp).